The following is a 322-amino-acid chain: ATP-dependent 6-phosphofructokinase (322 aa).

Gly11 provides a ligand contact to ATP. 21–25 (RAVTR) is an ADP binding site. ATP is bound by residues 72 to 73 (RC) and 102 to 105 (GDGS). A Mg(2+)-binding site is contributed by Asp103. 127-129 (TID) provides a ligand contact to substrate. The active-site Proton acceptor is the Asp129. Residue Arg156 coordinates ADP. Substrate-binding positions include Arg164 and 171 to 173 (MGR). Residues 187-189 (GAE), Arg213, and 215-217 (KKH) contribute to the ADP site. Residues Glu224, Arg245, and 251 to 254 (HIQR) contribute to the substrate site.

This sequence belongs to the phosphofructokinase type A (PFKA) family. ATP-dependent PFK group I subfamily. Prokaryotic clade 'B1' sub-subfamily. Homotetramer. The cofactor is Mg(2+).

It localises to the cytoplasm. It carries out the reaction beta-D-fructose 6-phosphate + ATP = beta-D-fructose 1,6-bisphosphate + ADP + H(+). It participates in carbohydrate degradation; glycolysis; D-glyceraldehyde 3-phosphate and glycerone phosphate from D-glucose: step 3/4. Allosterically activated by ADP and other diphosphonucleosides, and allosterically inhibited by phosphoenolpyruvate. Its function is as follows. Catalyzes the phosphorylation of D-fructose 6-phosphate to fructose 1,6-bisphosphate by ATP, the first committing step of glycolysis. The chain is ATP-dependent 6-phosphofructokinase from Staphylococcus epidermidis (strain ATCC 35984 / DSM 28319 / BCRC 17069 / CCUG 31568 / BM 3577 / RP62A).